The sequence spans 411 residues: Tyrosine--tRNA ligase (411 aa).

Residue Y34 coordinates L-tyrosine. The 'HIGH' region signature appears at 39-48 (CTATSLHIGS). L-tyrosine contacts are provided by Y171 and Q175. Residues 231-235 (KMGKT) carry the 'KMSKS' region motif. K234 is a binding site for ATP. The S4 RNA-binding domain occupies 345-411 (ISAYELFHEA…GKKKHILVRV (67 aa)).

It belongs to the class-I aminoacyl-tRNA synthetase family. TyrS type 1 subfamily. As to quaternary structure, homodimer.

It is found in the cytoplasm. The catalysed reaction is tRNA(Tyr) + L-tyrosine + ATP = L-tyrosyl-tRNA(Tyr) + AMP + diphosphate + H(+). Catalyzes the attachment of tyrosine to tRNA(Tyr) in a two-step reaction: tyrosine is first activated by ATP to form Tyr-AMP and then transferred to the acceptor end of tRNA(Tyr). This is Tyrosine--tRNA ligase from Rickettsia conorii (strain ATCC VR-613 / Malish 7).